The primary structure comprises 340 residues: Methionyl-tRNA formyltransferase (340 aa).

(6S)-5,6,7,8-tetrahydrofolate is bound at residue 110–113 (SLLP).

This sequence belongs to the Fmt family.

The enzyme catalyses L-methionyl-tRNA(fMet) + (6R)-10-formyltetrahydrofolate = N-formyl-L-methionyl-tRNA(fMet) + (6S)-5,6,7,8-tetrahydrofolate + H(+). In terms of biological role, attaches a formyl group to the free amino group of methionyl-tRNA(fMet). The formyl group appears to play a dual role in the initiator identity of N-formylmethionyl-tRNA by promoting its recognition by IF2 and preventing the misappropriation of this tRNA by the elongation apparatus. This chain is Methionyl-tRNA formyltransferase, found in Synechococcus sp. (strain WH7803).